The sequence spans 89 residues: Small ribosomal subunit protein bS20 (89 aa).

Residues 1 to 22 are disordered; sequence MANTASARKRIRQNERRRERNV. Residues 12–22 show a composition bias toward basic and acidic residues; sequence RQNERRRERNV.

It belongs to the bacterial ribosomal protein bS20 family.

Its function is as follows. Binds directly to 16S ribosomal RNA. The polypeptide is Small ribosomal subunit protein bS20 (Gluconobacter oxydans (strain 621H) (Gluconobacter suboxydans)).